We begin with the raw amino-acid sequence, 194 residues long: Homing endonuclease I-DmoI (194 aa).

The DOD-type homing endonuclease domain occupies 14–147; it reads LLGLIIGDGG…VSRWLNNLGV (134 aa). Active-site residues include D21 and E117.

The cofactor is a divalent metal cation.

Endonuclease involved in intron homing. Recognizes DNA in the 23S rRNA gene intron (minimally 5'-CCGGGTAAGTTCCGG-3'), cutting after A-8 on the top and C-11 on the bottom strand. Has a slow turnover rate, cuts the coding strand with a slight preference over the non-coding strand. The sequence is that of Homing endonuclease I-DmoI from Desulfurococcus mucosus (Desulfurococcus mobilis).